Reading from the N-terminus, the 795-residue chain is Antibiotic resistant DNA gyrase subunit B (795 aa).

The Toprim domain occupies 421–536; that stretch reads SELYLVEGNS…RGYIYIAQPP (116 aa). Residues Glu427, Asp501, and Asp503 each contribute to the Mg(2+) site.

Belongs to the type II topoisomerase GyrB family. In terms of assembly, heterotetramer, composed of two GyrA and two GyrB chains. In the heterotetramer, GyrA contains the active site tyrosine that forms a transient covalent intermediate with DNA, while GyrB binds cofactors and catalyzes ATP hydrolysis. Requires Mg(2+) as cofactor. It depends on Mn(2+) as a cofactor. Ca(2+) is required as a cofactor.

Its subcellular location is the cytoplasm. The catalysed reaction is ATP-dependent breakage, passage and rejoining of double-stranded DNA.. In terms of biological role, a type II topoisomerase that negatively supercoils closed circular double-stranded (ds) DNA in an ATP-dependent manner to modulate DNA topology and maintain chromosomes in an underwound state. Negative supercoiling favors strand separation, and DNA replication, transcription, recombination and repair, all of which involve strand separation. Also able to catalyze the interconversion of other topological isomers of dsDNA rings, including catenanes and knotted rings. Type II topoisomerases break and join 2 DNA strands simultaneously in an ATP-dependent manner. In Neisseria gonorrhoeae, this protein is Antibiotic resistant DNA gyrase subunit B.